The sequence spans 331 residues: Pectate lyase B (331 aa).

The first 25 residues, 1–25 (MKFTGSPLLWPSWLPLPAPPPPLPS), serve as a signal peptide directing secretion. The N-linked (GlcNAc...) asparagine glycan is linked to Asn-99. Ca(2+)-binding residues include Asp-139, Asp-169, and Asp-173. Arg-226 is an active-site residue.

Belongs to the polysaccharide lyase 1 family. The cofactor is Ca(2+).

It is found in the secreted. It carries out the reaction Eliminative cleavage of (1-&gt;4)-alpha-D-galacturonan to give oligosaccharides with 4-deoxy-alpha-D-galact-4-enuronosyl groups at their non-reducing ends.. It participates in glycan metabolism; pectin degradation; 2-dehydro-3-deoxy-D-gluconate from pectin: step 2/5. Functionally, acts as a virulence factor active in plant tissue maceration. This is Pectate lyase B (PLB) from Colletotrichum gloeosporioides (Anthracnose fungus).